We begin with the raw amino-acid sequence, 430 residues long: UDP-N-acetylmuramoylalanine--D-glutamate ligase (430 aa).

An ATP-binding site is contributed by 109–115 (GTDGKST).

The protein belongs to the MurCDEF family.

The protein localises to the cytoplasm. It carries out the reaction UDP-N-acetyl-alpha-D-muramoyl-L-alanine + D-glutamate + ATP = UDP-N-acetyl-alpha-D-muramoyl-L-alanyl-D-glutamate + ADP + phosphate + H(+). It participates in cell wall biogenesis; peptidoglycan biosynthesis. Cell wall formation. Catalyzes the addition of glutamate to the nucleotide precursor UDP-N-acetylmuramoyl-L-alanine (UMA). In Thermotoga petrophila (strain ATCC BAA-488 / DSM 13995 / JCM 10881 / RKU-1), this protein is UDP-N-acetylmuramoylalanine--D-glutamate ligase.